Consider the following 597-residue polypeptide: Elongation factor 4 (597 aa).

Positions K2–T184 constitute a tr-type G domain. Residues D14 to T19 and N131 to D134 each bind GTP.

The protein belongs to the TRAFAC class translation factor GTPase superfamily. Classic translation factor GTPase family. LepA subfamily.

The protein localises to the cell inner membrane. The catalysed reaction is GTP + H2O = GDP + phosphate + H(+). Required for accurate and efficient protein synthesis under certain stress conditions. May act as a fidelity factor of the translation reaction, by catalyzing a one-codon backward translocation of tRNAs on improperly translocated ribosomes. Back-translocation proceeds from a post-translocation (POST) complex to a pre-translocation (PRE) complex, thus giving elongation factor G a second chance to translocate the tRNAs correctly. Binds to ribosomes in a GTP-dependent manner. In Neisseria meningitidis serogroup C (strain 053442), this protein is Elongation factor 4.